Reading from the N-terminus, the 215-residue chain is Cytochrome b6 (215 aa).

The helical transmembrane segment at 32-52 threads the bilayer; the sequence is IFYCLGGITLTCFLVQIATGF. C35 lines the heme c pocket. Heme b-binding residues include H86 and H100. Transmembrane regions (helical) follow at residues 90 to 110, 116 to 136, and 186 to 206; these read ASMM…TGGF, LTWV…VTGY, and LHTF…FLMI. Residues H187 and H202 each coordinate heme b.

It belongs to the cytochrome b family. PetB subfamily. In terms of assembly, the 4 large subunits of the cytochrome b6-f complex are cytochrome b6, subunit IV (17 kDa polypeptide, PetD), cytochrome f and the Rieske protein, while the 4 small subunits are PetG, PetL, PetM and PetN. The complex functions as a dimer. Requires heme b as cofactor. Heme c serves as cofactor.

It is found in the plastid. The protein localises to the chloroplast thylakoid membrane. Component of the cytochrome b6-f complex, which mediates electron transfer between photosystem II (PSII) and photosystem I (PSI), cyclic electron flow around PSI, and state transitions. The polypeptide is Cytochrome b6 (Adiantum capillus-veneris (Maidenhair fern)).